The chain runs to 115 residues: NADH-ubiquinone oxidoreductase chain 3 (115 aa).

A run of 3 helical transmembrane segments spans residues F4–L24, F55–L75, and M87–V107.

This sequence belongs to the complex I subunit 3 family. In terms of assembly, core subunit of respiratory chain NADH dehydrogenase (Complex I) which is composed of 45 different subunits. Interacts with TMEM186. Interacts with TMEM242.

It is found in the mitochondrion inner membrane. The enzyme catalyses a ubiquinone + NADH + 5 H(+)(in) = a ubiquinol + NAD(+) + 4 H(+)(out). Core subunit of the mitochondrial membrane respiratory chain NADH dehydrogenase (Complex I) which catalyzes electron transfer from NADH through the respiratory chain, using ubiquinone as an electron acceptor. Essential for the catalytic activity of complex I. The sequence is that of NADH-ubiquinone oxidoreductase chain 3 from Osgoodomys banderanus (Michoacan deer mouse).